The sequence spans 509 residues: ATP synthase subunit alpha (509 aa).

Position 169–176 (169–176 (GDRQTGKT)) interacts with ATP.

This sequence belongs to the ATPase alpha/beta chains family. In terms of assembly, F-type ATPases have 2 components, CF(1) - the catalytic core - and CF(0) - the membrane proton channel. CF(1) has five subunits: alpha(3), beta(3), gamma(1), delta(1), epsilon(1). CF(0) has three main subunits: a(1), b(2) and c(9-12). The alpha and beta chains form an alternating ring which encloses part of the gamma chain. CF(1) is attached to CF(0) by a central stalk formed by the gamma and epsilon chains, while a peripheral stalk is formed by the delta and b chains.

It is found in the cell inner membrane. The enzyme catalyses ATP + H2O + 4 H(+)(in) = ADP + phosphate + 5 H(+)(out). Functionally, produces ATP from ADP in the presence of a proton gradient across the membrane. The alpha chain is a regulatory subunit. The polypeptide is ATP synthase subunit alpha (Brucella ovis (strain ATCC 25840 / 63/290 / NCTC 10512)).